A 584-amino-acid chain; its full sequence is Protein disulfide-isomerase-like protein of the testis (584 aa).

A signal peptide spans Met-1 to Ser-20. 4 N-linked (GlcNAc...) asparagine glycosylation sites follow: Asn-58, Asn-128, Asn-160, and Asn-340. In terms of domain architecture, Thioredoxin spans Leu-388–Asp-451. N-linked (GlcNAc...) asparagine glycosylation occurs at Asn-540. A Prevents secretion from ER motif is present at residues Lys-581–Leu-584.

The protein belongs to the protein disulfide isomerase family. In terms of assembly, homodimer. The homodimer is not disulfide-linked. Interacts with ERO1A and CLGN. N-glycosylated. In terms of tissue distribution, testis-specific.

The protein resides in the endoplasmic reticulum. In terms of biological role, probable redox-inactive chaperone involved in spermatogenesis. The protein is Protein disulfide-isomerase-like protein of the testis (PDILT) of Homo sapiens (Human).